Reading from the N-terminus, the 186-residue chain is Lipid A acyltransferase PagP (186 aa).

An N-terminal signal peptide occupies residues 1-25; it reads MNVSKYVAIFSFVFIQLISVGKVFA. Catalysis depends on residues His58, Asp101, and Ser102.

It belongs to the lipid A palmitoyltransferase family. Homodimer.

Its subcellular location is the cell outer membrane. It carries out the reaction a lipid A + a 1,2-diacyl-sn-glycero-3-phosphocholine = a hepta-acyl lipid A + a 2-acyl-sn-glycero-3-phosphocholine. The enzyme catalyses a lipid IVA + a 1,2-diacyl-sn-glycero-3-phosphocholine = a lipid IVB + a 2-acyl-sn-glycero-3-phosphocholine. It catalyses the reaction a lipid IIA + a 1,2-diacyl-sn-glycero-3-phosphocholine = a lipid IIB + a 2-acyl-sn-glycero-3-phosphocholine. Functionally, transfers a fatty acid residue from the sn-1 position of a phospholipid to the N-linked hydroxyfatty acid chain on the proximal unit of lipid A or its precursors. The protein is Lipid A acyltransferase PagP of Shigella flexneri serotype X (strain 2002017).